The primary structure comprises 178 residues: ATP-dependent protease subunit HslV (178 aa).

Thr-7 is a catalytic residue. The Na(+) site is built by Gly-162, Cys-165, and Thr-168.

Belongs to the peptidase T1B family. HslV subfamily. A double ring-shaped homohexamer of HslV is capped on each side by a ring-shaped HslU homohexamer. The assembly of the HslU/HslV complex is dependent on binding of ATP.

The protein resides in the cytoplasm. It carries out the reaction ATP-dependent cleavage of peptide bonds with broad specificity.. Its activity is regulated as follows. Allosterically activated by HslU binding. In terms of biological role, protease subunit of a proteasome-like degradation complex believed to be a general protein degrading machinery. The chain is ATP-dependent protease subunit HslV from Burkholderia ambifaria (strain ATCC BAA-244 / DSM 16087 / CCUG 44356 / LMG 19182 / AMMD) (Burkholderia cepacia (strain AMMD)).